Consider the following 123-residue polypeptide: Protein HesB, heterocyst (123 aa).

It belongs to the HesB/IscA family.

Functionally, may be required for efficient nitrogen fixation. The protein is Protein HesB, heterocyst (hesB1) of Trichormus variabilis (strain ATCC 29413 / PCC 7937) (Anabaena variabilis).